The sequence spans 428 residues: UDP-N-acetylglucosamine 1-carboxyvinyltransferase (428 aa).

25 to 26 (KN) is a binding site for phosphoenolpyruvate. Position 102 (Arg-102) interacts with UDP-N-acetyl-alpha-D-glucosamine. Catalysis depends on Cys-126, which acts as the Proton donor. Cys-126 bears the 2-(S-cysteinyl)pyruvic acid O-phosphothioketal mark. Asp-316 and Val-338 together coordinate UDP-N-acetyl-alpha-D-glucosamine.

Belongs to the EPSP synthase family. MurA subfamily.

Its subcellular location is the cytoplasm. The catalysed reaction is phosphoenolpyruvate + UDP-N-acetyl-alpha-D-glucosamine = UDP-N-acetyl-3-O-(1-carboxyvinyl)-alpha-D-glucosamine + phosphate. The protein operates within cell wall biogenesis; peptidoglycan biosynthesis. Its function is as follows. Cell wall formation. Adds enolpyruvyl to UDP-N-acetylglucosamine. The sequence is that of UDP-N-acetylglucosamine 1-carboxyvinyltransferase from Anaplasma marginale (strain Florida).